The chain runs to 397 residues: tRNA pseudouridine synthase D (397 aa).

The active-site Nucleophile is Asp-76. The TRUD domain maps to 151–361 (GVPNFFGEQR…MEGERRPLRV (211 aa)).

The protein belongs to the pseudouridine synthase TruD family.

The catalysed reaction is uridine(13) in tRNA = pseudouridine(13) in tRNA. Its function is as follows. Responsible for synthesis of pseudouridine from uracil-13 in transfer RNAs. The sequence is that of tRNA pseudouridine synthase D from Geotalea daltonii (strain DSM 22248 / JCM 15807 / FRC-32) (Geobacter daltonii).